The sequence spans 351 residues: Glycerol-1-phosphate dehydrogenase [NAD(P)+] (351 aa).

Residues 97-101 and 119-122 contribute to the NAD(+) site; these read GKVID and TSPS. D124 serves as a coordination point for substrate. Residue S128 coordinates NAD(+). D171 serves as a coordination point for substrate. Zn(2+) is bound by residues D171 and H251. A substrate-binding site is contributed by H255. H267 serves as a coordination point for Zn(2+).

It belongs to the glycerol-1-phosphate dehydrogenase family. In terms of assembly, homodimer. It depends on Zn(2+) as a cofactor.

Its subcellular location is the cytoplasm. The catalysed reaction is sn-glycerol 1-phosphate + NAD(+) = dihydroxyacetone phosphate + NADH + H(+). The enzyme catalyses sn-glycerol 1-phosphate + NADP(+) = dihydroxyacetone phosphate + NADPH + H(+). Its pathway is membrane lipid metabolism; glycerophospholipid metabolism. Its function is as follows. Catalyzes the NAD(P)H-dependent reduction of dihydroxyacetonephosphate (DHAP or glycerone phosphate) to glycerol 1-phosphate (G1P). The G1P thus generated is used as the glycerophosphate backbone of phospholipids in the cellular membranes of Archaea. This is Glycerol-1-phosphate dehydrogenase [NAD(P)+] from Saccharolobus solfataricus (strain ATCC 35092 / DSM 1617 / JCM 11322 / P2) (Sulfolobus solfataricus).